A 373-amino-acid chain; its full sequence is Peroxisomal biogenesis factor 3 (373 aa).

Topologically, residues methionine 1–lysine 15 are cytoplasmic. The interval methionine 1–alanine 45 is targeting to peroxisomes. A helical transmembrane segment spans residues cysteine 16–lysine 36. The Peroxisomal segment spans residues isoleucine 37–isoleucine 116. Residues valine 117–isoleucine 140 traverse the membrane as a helical segment. Residues tyrosine 120–isoleucine 136 are interaction with PEX19. Residues tyrosine 141–lysine 373 are Cytoplasmic-facing.

Belongs to the peroxin-3 family. As to quaternary structure, interacts with PEX19.

The protein localises to the peroxisome membrane. In terms of biological role, involved in peroxisome biosynthesis and integrity. Assembles membrane vesicles before the matrix proteins are translocated. As a docking factor for PEX19, is necessary for the import of peroxisomal membrane proteins in the peroxisomes. This chain is Peroxisomal biogenesis factor 3 (PEX3), found in Cricetulus longicaudatus (Long-tailed dwarf hamster).